The sequence spans 284 residues: MDAIKKKMQAMKLEKDNAIDKADTCENQAKDANSRADKLNEEVRDLEKKFVQVEIDLVTAKEQLEKANTELEEKEKLLTATESEVATQNRKVQQIEEDLEKSEERSTTAQQKLLEATQSADENNRMCKVLENRSQQDEERMDQLTNQLKEARMLAEDADTKSDEVSRKLAFVEDELEVAEDRVRSGESKIMELEEELKVVGNSLKSLEVSEEKANQRVEEFKREMKTLSIKLKEAEQRAEHAEKQVKRLQKEVDRLEDRLFNEKEKYKAICDDLDQTFAELTGY.

A coiled-coil region spans residues 1–284 (MDAIKKKMQA…DQTFAELTGY (284 aa)). The segment at 82 to 110 (ESEVATQNRKVQQIEEDLEKSEERSTTAQ) is disordered.

This sequence belongs to the tropomyosin family. In terms of assembly, homodimer.

Functionally, tropomyosin, in association with the troponin complex, plays a central role in the calcium dependent regulation of muscle contraction. May also regulate motor systems required to maintain nuclear integrity and apico-basal polarity during embryogenesis. The polypeptide is Tropomyosin-2 (Tm2) (Drosophila melanogaster (Fruit fly)).